A 31-amino-acid polypeptide reads, in one-letter code: HSQGMFTNDYSKYLEEKLAQEFVEWLKNGKS.

The protein belongs to the glucagon family.

Its subcellular location is the secreted. Functionally, glucagon plays a key role in glucose metabolism and homeostasis. Regulates blood glucose by increasing gluconeogenesis and decreasing glycolysis. The sequence is that of Glucagon-5 from Huso dauricus (Kaluga sturgeon).